A 241-amino-acid chain; its full sequence is Phosphoribosylaminoimidazole-succinocarboxamide synthase (241 aa).

This sequence belongs to the SAICAR synthetase family.

The catalysed reaction is 5-amino-1-(5-phospho-D-ribosyl)imidazole-4-carboxylate + L-aspartate + ATP = (2S)-2-[5-amino-1-(5-phospho-beta-D-ribosyl)imidazole-4-carboxamido]succinate + ADP + phosphate + 2 H(+). It participates in purine metabolism; IMP biosynthesis via de novo pathway; 5-amino-1-(5-phospho-D-ribosyl)imidazole-4-carboxamide from 5-amino-1-(5-phospho-D-ribosyl)imidazole-4-carboxylate: step 1/2. The polypeptide is Phosphoribosylaminoimidazole-succinocarboxamide synthase (Caldivirga maquilingensis (strain ATCC 700844 / DSM 13496 / JCM 10307 / IC-167)).